Here is an 816-residue protein sequence, read N- to C-terminus: Glycerol-3-phosphate acyltransferase (816 aa).

The HXXXXD motif signature appears at cysteine 298–methionine 303.

This sequence belongs to the GPAT/DAPAT family.

It localises to the cell membrane. It catalyses the reaction sn-glycerol 3-phosphate + an acyl-CoA = a 1-acyl-sn-glycero-3-phosphate + CoA. It functions in the pathway phospholipid metabolism; CDP-diacylglycerol biosynthesis; CDP-diacylglycerol from sn-glycerol 3-phosphate: step 1/3. This is Glycerol-3-phosphate acyltransferase from Hamiltonella defensa subsp. Acyrthosiphon pisum (strain 5AT).